A 154-amino-acid polypeptide reads, in one-letter code: Fibroblast growth factor 2 (154 aa).

Residues 1–9 constitute a propeptide that is removed on maturation; that stretch reads MAAGSITSL. The segment at 1–20 is disordered; it reads MAAGSITSLPALPEDGGGAF. Asn35 provides a ligand contact to heparin. Residue Tyr81 is modified to Phosphotyrosine; by TEC. Lys94 is covalently cross-linked (Glycyl lysine isopeptide (Lys-Gly) (interchain with G-Cter in SUMO1)). The interval 127–143 is heparin-binding; the sequence is KRTGQYKLGSKTGPGQK.

Belongs to the heparin-binding growth factors family. In terms of assembly, monomer. Homodimer. Interacts with FGFR1, FGFR2, FGFR3 and FGFR4. Affinity between fibroblast growth factors (FGFs) and their receptors is increased by heparan sulfate glycosaminoglycans that function as coreceptors. Interacts with CSPG4, FGFBP1 and TEC. Found in a complex with FGFBP1, FGF1 and FGF2. Interacts with FGFBP3. Interacts with integrin ITGAV:ITGB3; the interaction is required for FGF2 signaling. Interacts with SNORC (via the extracellular domain). Interacts with GPC3. Phosphorylation at Tyr-81 regulates FGF2 unconventional secretion. In terms of tissue distribution, found in all tissues examined.

The protein resides in the secreted. It localises to the nucleus. Acts as a ligand for FGFR1, FGFR2, FGFR3 and FGFR4. Also acts as an integrin ligand which is required for FGF2 signaling. Binds to integrin ITGAV:ITGB3. Plays an important role in the regulation of cell survival, cell division, cell differentiation and cell migration. Functions as a potent mitogen in vitro. Can induce angiogenesis. Mediates phosphorylation of ERK1/2 and thereby promotes retinal lens fiber differentiation. The sequence is that of Fibroblast growth factor 2 (Fgf2) from Rattus norvegicus (Rat).